Here is a 366-residue protein sequence, read N- to C-terminus: Putative F-box protein At1g26515 (366 aa).

A disordered region spans residues 1–20; the sequence is MKTRSKKTKTENNQEKSKEK. Positions 8–20 are enriched in basic and acidic residues; sequence TKTENNQEKSKEK. In terms of domain architecture, F-box spans 20-66; it reads KNKFDQLPLDLEIEIFRRLPLKSVARFLTLSKSCAATIRSPSFITSF.

The polypeptide is Putative F-box protein At1g26515 (Arabidopsis thaliana (Mouse-ear cress)).